A 377-amino-acid chain; its full sequence is tRNA-specific 2-thiouridylase MnmA (377 aa).

ATP is bound by residues 18 to 25 (AMSGGVDS) and methionine 44. Cysteine 113 functions as the Nucleophile in the catalytic mechanism. An intrachain disulfide couples cysteine 113 to cysteine 210. Glycine 137 is a binding site for ATP. Positions 159–161 (RDQ) are interaction with tRNA. The Cysteine persulfide intermediate role is filled by cysteine 210.

It belongs to the MnmA/TRMU family.

Its subcellular location is the cytoplasm. The enzyme catalyses S-sulfanyl-L-cysteinyl-[protein] + uridine(34) in tRNA + AH2 + ATP = 2-thiouridine(34) in tRNA + L-cysteinyl-[protein] + A + AMP + diphosphate + H(+). Its function is as follows. Catalyzes the 2-thiolation of uridine at the wobble position (U34) of tRNA, leading to the formation of s(2)U34. This is tRNA-specific 2-thiouridylase MnmA from Rhodospirillum rubrum (strain ATCC 11170 / ATH 1.1.1 / DSM 467 / LMG 4362 / NCIMB 8255 / S1).